The sequence spans 181 residues: ATP synthase subunit b, chloroplastic (181 aa).

The helical transmembrane segment at 28 to 50 (IINLSVVLGVLIYFGKGVLSNLL) threads the bilayer.

This sequence belongs to the ATPase B chain family. F-type ATPases have 2 components, F(1) - the catalytic core - and F(0) - the membrane proton channel. F(1) has five subunits: alpha(3), beta(3), gamma(1), delta(1), epsilon(1). F(0) has four main subunits: a(1), b(1), b'(1) and c(10-14). The alpha and beta chains form an alternating ring which encloses part of the gamma chain. F(1) is attached to F(0) by a central stalk formed by the gamma and epsilon chains, while a peripheral stalk is formed by the delta, b and b' chains.

It localises to the plastid. Its subcellular location is the chloroplast thylakoid membrane. In terms of biological role, f(1)F(0) ATP synthase produces ATP from ADP in the presence of a proton or sodium gradient. F-type ATPases consist of two structural domains, F(1) containing the extramembraneous catalytic core and F(0) containing the membrane proton channel, linked together by a central stalk and a peripheral stalk. During catalysis, ATP synthesis in the catalytic domain of F(1) is coupled via a rotary mechanism of the central stalk subunits to proton translocation. Its function is as follows. Component of the F(0) channel, it forms part of the peripheral stalk, linking F(1) to F(0). In Cryptomeria japonica (Japanese cedar), this protein is ATP synthase subunit b, chloroplastic.